Here is a 331-residue protein sequence, read N- to C-terminus: MIILGIESTAHTIGVGIVNDNEVLANENETYTPPQGSGIHPREAADHHALKASHLVKRALDKAEVKLSDLDAVAFSQGPGLGPALRVGATVARFIAIKYGKPLVPVHHGVAHIEIAKMTTGAKDPLVLLVSGGHTMVTAYSGGRYRVFGETMDISVGNCLDMFARFLGLPNPGVPHLEECARRGKVMLELPYTVKGQDMSFAGLYTAAVKLVKEGRRVENVCLSIVNTAYYMLAEVTERALALLGKREIVIAGGVARSPILRSIMEIVASEYTATLHVVPPEYAGDNGAMIAWTGLLAYKSGVSISIEDSVIKQRWRIDEVPIPWITSTVS.

Fe cation is bound by residues H108 and H112. Substrate contacts are provided by residues 129–133, D161, E178, and S258; that span reads LVSGG. D286 is a Fe cation binding site.

The protein belongs to the KAE1 / TsaD family. The cofactor is Fe(2+).

The protein resides in the cytoplasm. The enzyme catalyses L-threonylcarbamoyladenylate + adenosine(37) in tRNA = N(6)-L-threonylcarbamoyladenosine(37) in tRNA + AMP + H(+). In terms of biological role, required for the formation of a threonylcarbamoyl group on adenosine at position 37 (t(6)A37) in tRNAs that read codons beginning with adenine. Is probably involved in the transfer of the threonylcarbamoyl moiety of threonylcarbamoyl-AMP (TC-AMP) to the N6 group of A37. The sequence is that of tRNA N6-adenosine threonylcarbamoyltransferase from Caldivirga maquilingensis (strain ATCC 700844 / DSM 13496 / JCM 10307 / IC-167).